The primary structure comprises 234 residues: Purine nucleoside phosphorylase DeoD-type (234 aa).

A purine D-ribonucleoside is bound at residue histidine 4. Residues glycine 20, arginine 24, arginine 43, and 87 to 90 (RIGS) contribute to the phosphate site. A purine D-ribonucleoside contacts are provided by residues 179-181 (DME) and 203-204 (SD). The Proton donor role is filled by aspartate 204.

The protein belongs to the PNP/UDP phosphorylase family. Homohexamer; trimer of homodimers.

It catalyses the reaction a purine D-ribonucleoside + phosphate = a purine nucleobase + alpha-D-ribose 1-phosphate. The catalysed reaction is a purine 2'-deoxy-D-ribonucleoside + phosphate = a purine nucleobase + 2-deoxy-alpha-D-ribose 1-phosphate. Its function is as follows. Catalyzes the reversible phosphorolytic breakdown of the N-glycosidic bond in the beta-(deoxy)ribonucleoside molecules, with the formation of the corresponding free purine bases and pentose-1-phosphate. The protein is Purine nucleoside phosphorylase DeoD-type of Shewanella oneidensis (strain ATCC 700550 / JCM 31522 / CIP 106686 / LMG 19005 / NCIMB 14063 / MR-1).